A 317-amino-acid chain; its full sequence is Beta-ketoacyl-[acyl-carrier-protein] synthase III (317 aa).

Active-site residues include Cys112 and His244. The tract at residues 245–249 (QANLR) is ACP-binding. Asn274 is a catalytic residue.

The protein belongs to the thiolase-like superfamily. FabH family. As to quaternary structure, homodimer.

Its subcellular location is the cytoplasm. It catalyses the reaction malonyl-[ACP] + acetyl-CoA + H(+) = 3-oxobutanoyl-[ACP] + CO2 + CoA. The protein operates within lipid metabolism; fatty acid biosynthesis. Catalyzes the condensation reaction of fatty acid synthesis by the addition to an acyl acceptor of two carbons from malonyl-ACP. Catalyzes the first condensation reaction which initiates fatty acid synthesis and may therefore play a role in governing the total rate of fatty acid production. Possesses both acetoacetyl-ACP synthase and acetyl transacylase activities. Its substrate specificity determines the biosynthesis of branched-chain and/or straight-chain of fatty acids. This is Beta-ketoacyl-[acyl-carrier-protein] synthase III from Citrobacter koseri (strain ATCC BAA-895 / CDC 4225-83 / SGSC4696).